We begin with the raw amino-acid sequence, 318 residues long: NADH-ubiquinone oxidoreductase chain 1 (318 aa).

Transmembrane regions (helical) follow at residues 2–22, 69–89, 102–122, 146–166, 171–191, 222–242, 253–273, and 294–314; these read FLIN…FLTL, FLFT…WAPL, LLFI…SGWA, MTTI…TAFA, HLWL…STLA, LFFM…VILF, EIST…FLWV, and LPLT…LACI.

It belongs to the complex I subunit 1 family.

The protein localises to the mitochondrion inner membrane. It carries out the reaction a ubiquinone + NADH + 5 H(+)(in) = a ubiquinol + NAD(+) + 4 H(+)(out). Functionally, core subunit of the mitochondrial membrane respiratory chain NADH dehydrogenase (Complex I) that is believed to belong to the minimal assembly required for catalysis. Complex I functions in the transfer of electrons from NADH to the respiratory chain. The immediate electron acceptor for the enzyme is believed to be ubiquinone. The chain is NADH-ubiquinone oxidoreductase chain 1 (MT-ND1) from Mammuthus primigenius (Siberian woolly mammoth).